A 389-amino-acid chain; its full sequence is Chalcone synthase 4 (389 aa).

Residue C164 is part of the active site.

Belongs to the thiolase-like superfamily. Chalcone/stilbene synthases family.

It catalyses the reaction (E)-4-coumaroyl-CoA + 3 malonyl-CoA + 3 H(+) = 2',4,4',6'-tetrahydroxychalcone + 3 CO2 + 4 CoA. It participates in secondary metabolite biosynthesis; flavonoid biosynthesis. The primary product of this enzyme is 4,2',4',6'-tetrahydroxychalcone (also termed naringenin-chalcone or chalcone) which can under specific conditions spontaneously isomerize into naringenin. The sequence is that of Chalcone synthase 4 (CHS4) from Pisum sativum (Garden pea).